We begin with the raw amino-acid sequence, 1012 residues long: Multiple C2 domain and transmembrane region protein 10 (1012 aa).

The 115-residue stretch at 1 to 115 (MTEAKTGTGN…REGESVVQLY (115 aa)) folds into the C2 1 domain. The interval 141–203 (ENGENVRRVN…SQQNGQGQRM (63 aa)) is disordered. Residues 148-160 (RVNRSGGSKKSKK) are compositionally biased toward basic residues. Composition is skewed to low complexity over residues 161-180 (VQNVSSSMAIQQQQQQQQQQ) and 188-202 (RGNQQQSQQNGQGQR). C2 domains follow at residues 262 to 376 (SSHK…PQWY), 411 to 551 (KAGN…SRWF), and 585 to 710 (YNSD…THSY). Residues Glu-296, Glu-344, Asn-346, and Glu-349 each coordinate Ca(2+). 3 helical membrane-spanning segments follow: residues 810–830 (FFRLVNVISGLVAVAKLVEVM), 841–861 (VFVLAFLFMVLFPELLLPCLL), and 952–972 (ATFLFLMFCLLAAVGFYTVPV).

The protein belongs to the MCTP family. Ca(2+) serves as cofactor. As to expression, highly expressed in roots meristems, shoot apical meristems (SAMs) and in incipient leaf primordia. Observed in flowers.

It localises to the endoplasmic reticulum membrane. May function as a signaling molecule by regulating the trafficking of other regulators. This Arabidopsis thaliana (Mouse-ear cress) protein is Multiple C2 domain and transmembrane region protein 10.